A 1170-amino-acid polypeptide reads, in one-letter code: MGVQGLWKLLECSGHRVSPEALEGKVLAVDISIWLNQALKGVRDSHGNVIENAHLLTLFHRLCKLLFFRIRPIFVFDGDAPLLKKQTLAKRRQRKDSASIDSRKTTEKLLKTFLKRQALKTAFRSSRHEAPPSLTQVQRQDDIYVLPPLPEEEKHSSEEEDEKQWQARMDQKQALQEEFFHNPQAIDIESEDFSSLPPEVKHEILTDMKEFTKRRRTLFEAMPEESNDFSQYQLKGLLKKNYLNQHIENVQKEMNQQHSGQIQRQYQDEGGFLKEVESRRVVSEDTSHYILIKGIQGKKVMDVDSESLPSSSNVHSVSSNLKSSPHEKVKPEREPEAAPPSPRTLLAIQAAMLGSSSEDEPESREGRQSKERNSGATADAGSISPRTCAAIQKALDDDNDEKVSGSSDDLAEKMLLGSGLEQEEHADETAERGGGVPFDTAPLTPSVTEVKECVTSGSSANGQTDSAHSFTTASHRCDTPKETVSLARAVKEASQISSECEVEGRPAALSPAFIGTPSSHVSGVLSEREPTLAPPTTRTHSDQGIDIHPEDPELQNGLYPLETKCNSSRLSSDDETEGGQNPAPKACSTVHVPAEAMSNLENALPSNAEERGDFQETIQLREVPEAAARELISAPKPMGPMEMESEESESDGSFIEVQSVVSNSELQTESSEASTHLSEKDAEEPRETLEEGTSRDTECLLQDSSDIEAMEGHREADIDAEDMPNEWQDINLEELDALESNLLAEQNSLKAQKQQQDRIAASVTGQMFLESQELLRLFGVPYIQAPMEAEAQCAMLDLTDQTSGTITDDSDIWLFGARHVYKNFFNKNKFVEYYQYVDFYSQLGLDRNKLINLAYLLGSDYTEGIPTVGCVTAMEILNEFPGRGLDPLLKFSEWWHEAQNNKKVAENPYDTKVKKKLRKLQLTPGFPNPAVADAYLRPVVDDSRGSFLWGKPDVDKISTFCQRYFGWNRMKTDESLYPVLKHLNAHQTQLRIDSFFRLAQQEKQDAKLIKSHRLNRAVTCILRKEREEKAPELTKVTEALDDAKGKTQKRELPYKKETSVPKRRRPSGNGGFLGDPYCSESPQESSCEDGEGSSVMSARQRSAAESSKISCSDVPDLVRDPPHGRQGCVSTSSSSEDDEDKAKTVLVTARPVFGKKKLKLKSMKRRKKKT.

Positions 1–78 (MGVQGLWKLL…RIRPIFVFDG (78 aa)) are N-domain. At Lys-8 the chain carries N6-acetyllysine. Mg(2+) is bound at residue Asp-30. A DNA-binding; may bind to the undamaged single-strand DNA of the DNA repair bubble region spans residues 31–67 (ISIWLNQALKGVRDSHGNVIENAHLLTLFHRLCKLLF). Residue Asp-77 participates in Mg(2+) binding. The spacer region stretch occupies residues 79-784 (DAPLLKKQTL…LRLFGVPYIQ (706 aa)). Disordered regions lie at residues 304 to 479 (DSES…RCDT), 520 to 587 (HVSG…PKAC), and 600 to 701 (LENA…ECLL). Residues 306–323 (ESLPSSSNVHSVSSNLKS) are compositionally biased toward low complexity. 2 stretches are compositionally biased toward basic and acidic residues: residues 324–336 (SPHEKVKPEREPE) and 363–373 (SREGRQSKERN). Phosphoserine is present on Ser-384. Residues 455 to 474 (TSGSSANGQTDSAHSFTTAS) show a composition bias toward polar residues. Positions 539–551 (THSDQGIDIHPED) are enriched in basic and acidic residues. The span at 659-676 (SVVSNSELQTESSEASTH) shows a compositional bias: polar residues. Over residues 677–698 (LSEKDAEEPRETLEEGTSRDTE) the composition is skewed to basic and acidic residues. A phosphoserine mark is found at Ser-704 and Ser-705. The I-domain stretch occupies residues 785–880 (APMEAEAQCA…VTAMEILNEF (96 aa)). Mg(2+)-binding residues include Glu-788, Glu-790, Asp-809, and Asp-811. The tract at residues 819-835 (HVYKNFFNKNKFVEYYQ) is DNA-binding; may bind to the undamaged single-strand DNA of the DNA repair bubble. The segment at 847–879 (RNKLINLAYLLGSDYTEGIPTVGCVTAMEILNE) is DNA-binding; H2TH (helix-2turn-helix) motif which binds double-stranded DNA. Asp-860 is a binding site for Mg(2+). A DNA-binding; may bind double-stranded DNA region spans residues 911–917 (TKVKKKL). The segment at 980–1008 (LKHLNAHQTQLRIDSFFRLAQQEKQDAKL) is interaction with PCNA. Residues 1010-1170 (KSHRLNRAVT…KSMKRRKKKT (161 aa)) are interaction with ERCC6/CSB. Residues 1033-1146 (LTKVTEALDD…DDEDKAKTVL (114 aa)) form a disordered region. Residues 1041-1060 (DDAKGKTQKRELPYKKETSV) show a composition bias toward basic and acidic residues. The short motif at 1049–1065 (KRELPYKKETSVPKRRR) is the Nuclear localization signal 1 element. Polar residues predominate over residues 1094 to 1110 (SVMSARQRSAAESSKIS). The short motif at 1153 to 1170 (FGKKKLKLKSMKRRKKKT) is the Nuclear localization signal 2 element.

It belongs to the XPG/RAD2 endonuclease family. XPG subfamily. As to quaternary structure, monomer. Homodimer. Component of the homologous recombination repair (HR) complex composed of ERCC5/XPG, BRCA2, PALB2, DSS1 and RAD51. Within the complex, interacts with BRCA2 and PALB2. Interacts with RNA polymerase II. Interacts (via C-terminus) with ERCC6/CSB; the interaction stimulates ERCC6/CSB binding to the DNA repair bubble and ERCC6/CSB ATPase activity. May form a complex composed of RNA polymerase II, ERCC6/CSB and ERCC5/XPG which associates with the DNA repair bubble during transcription-coupled nucleotide excision repair. Interacts with BRCA1; the interaction promotes the release of BRCA1 from DNA. Interacts with PCNA. Interacts with NTHL1; the interaction stimulates NTHL1 activity and NTHL1 binding to its DNA substrate. Mg(2+) serves as cofactor.

The protein resides in the nucleus. It is found in the chromosome. Single-stranded structure-specific DNA endonuclease involved in DNA excision repair. Makes the 3'incision in DNA nucleotide excision repair (NER). Binds and bends DNA repair bubble substrate and breaks base stacking at the single-strand/double-strand DNA junction of the DNA bubble. Plays a role in base excision repair (BER) by promoting the binding of DNA glycosylase NTHL1 to its substrate and increasing NTHL1 catalytic activity that removes oxidized pyrimidines from DNA. Involved in transcription-coupled nucleotide excision repair (TCR) which allows RNA polymerase II-blocking lesions to be rapidly removed from the transcribed strand of active genes. Functions during the initial step of TCR in cooperation with ERCC6/CSB to recognized stalled RNA polymerase II. Also, stimulates ERCC6/CSB binding to the DNA repair bubble and ERCC6/CSB ATPase activity. Required for DNA replication fork maintenance and preservation of genomic stability. Involved in homologous recombination repair (HRR) induced by DNA replication stress by recruiting RAD51, BRCA2, and PALB2 to the damaged DNA site. During HRR, binds to the replication fork with high specificity and stabilizes it. Also, acts upstream of HRR, to promote the release of BRCA1 from DNA. The polypeptide is DNA excision repair protein ERCC-5 (Ercc5) (Mus musculus (Mouse)).